The chain runs to 267 residues: 4-hydroxy-tetrahydrodipicolinate reductase (267 aa).

NAD(+) is bound at residue 8–13; that stretch reads GANGRM. NADP(+) is bound at residue R35. NAD(+) contacts are provided by residues 98–100 and 122–125; these read GTT and AANY. The Proton donor/acceptor role is filled by H155. Residue H156 participates in (S)-2,3,4,5-tetrahydrodipicolinate binding. Residue K159 is the Proton donor of the active site. 165 to 166 contributes to the (S)-2,3,4,5-tetrahydrodipicolinate binding site; the sequence is GT.

Belongs to the DapB family.

It is found in the cytoplasm. It catalyses the reaction (S)-2,3,4,5-tetrahydrodipicolinate + NAD(+) + H2O = (2S,4S)-4-hydroxy-2,3,4,5-tetrahydrodipicolinate + NADH + H(+). The catalysed reaction is (S)-2,3,4,5-tetrahydrodipicolinate + NADP(+) + H2O = (2S,4S)-4-hydroxy-2,3,4,5-tetrahydrodipicolinate + NADPH + H(+). Its pathway is amino-acid biosynthesis; L-lysine biosynthesis via DAP pathway; (S)-tetrahydrodipicolinate from L-aspartate: step 4/4. Catalyzes the conversion of 4-hydroxy-tetrahydrodipicolinate (HTPA) to tetrahydrodipicolinate. The polypeptide is 4-hydroxy-tetrahydrodipicolinate reductase (Pseudoalteromonas atlantica (strain T6c / ATCC BAA-1087)).